The following is a 111-amino-acid chain: Probable 4-amino-4-deoxy-L-arabinose-phosphoundecaprenol flippase subunit ArnE (111 aa).

The next 3 membrane-spanning stretches (helical) occupy residues 38-58 (LWLG…LLVL), 61-81 (LPVG…TLAA), and 89-109 (VLPR…ILGS). The EamA domain occupies 40 to 109 (LGLALICMGA…IISGIIILGS (70 aa)).

This sequence belongs to the ArnE family. As to quaternary structure, heterodimer of ArnE and ArnF.

The protein resides in the cell inner membrane. It participates in bacterial outer membrane biogenesis; lipopolysaccharide biosynthesis. In terms of biological role, translocates 4-amino-4-deoxy-L-arabinose-phosphoundecaprenol (alpha-L-Ara4N-phosphoundecaprenol) from the cytoplasmic to the periplasmic side of the inner membrane. The sequence is that of Probable 4-amino-4-deoxy-L-arabinose-phosphoundecaprenol flippase subunit ArnE from Salmonella paratyphi A (strain ATCC 9150 / SARB42).